We begin with the raw amino-acid sequence, 195 residues long: uncharacterized protein (195 aa).

Residues 24–141 (NTDENLKLIF…VFLADKISWD (118 aa)) form the HD domain.

This is an uncharacterized protein from Lactococcus lactis subsp. cremoris (Streptococcus cremoris).